The sequence spans 447 residues: EIVHIQGGQCGNQIGAKFWEVVCAEHGIDPTGRYGGDTDLQLERINVYYNEASCGRYVPRAVLMDLEPGTMDSVRSGPYGQIFRPDNFVFGQSGAGNNWAKGHYTEGAELIDSVLDVVRKEAENCDCLQGFQVCHSLGGGTGSGMGTLLISKIREEYPDRMMLTFSVFPSPKVSDTVVEPYNATLSVHQLVENADECMVLDNEALYDICFRTLKLTTPSFGDLNHLISATMSGVTCCLRFPGQLNSDLRKLAVNLIPFPRLHFFMLGFAPLTSRGSQQYRALSVPEITQQMWDSKNMMCAADPRHGRYLTASAIFRGKMSTKEVDEQMMNVQNKNSSYFVEWIPNNVKSTVCDIPPTGLKMASTFIGNSTSIQEMFRRVSEQFTAMFRRKAFLHWYTGEGMDEMEFTEAESNMNDLVSEYQQYQDATAEEDEYEEEEEDYHQEHDEM.

GTP-binding residues include Q9, E67, S136, G140, T141, G142, N202, and N224. E67 serves as a coordination point for Mg(2+). The span at 411–425 (SNMNDLVSEYQQYQD) shows a compositional bias: polar residues. The tract at residues 411 to 447 (SNMNDLVSEYQQYQDATAEEDEYEEEEEDYHQEHDEM) is disordered. Positions 427–440 (TAEEDEYEEEEEDY) are enriched in acidic residues.

It belongs to the tubulin family. Dimer of alpha and beta chains. A typical microtubule is a hollow water-filled tube with an outer diameter of 25 nm and an inner diameter of 15 nM. Alpha-beta heterodimers associate head-to-tail to form protofilaments running lengthwise along the microtubule wall with the beta-tubulin subunit facing the microtubule plus end conferring a structural polarity. Microtubules usually have 13 protofilaments but different protofilament numbers can be found in some organisms and specialized cells. It depends on Mg(2+) as a cofactor.

It localises to the cytoplasm. Its subcellular location is the cytoskeleton. Its function is as follows. Tubulin is the major constituent of microtubules, a cylinder consisting of laterally associated linear protofilaments composed of alpha- and beta-tubulin heterodimers. Microtubules grow by the addition of GTP-tubulin dimers to the microtubule end, where a stabilizing cap forms. Below the cap, tubulin dimers are in GDP-bound state, owing to GTPase activity of alpha-tubulin. The polypeptide is Tubulin beta-2 chain (TUBB2) (Pisum sativum (Garden pea)).